The primary structure comprises 631 residues: MEITRSNFKDTLPKVYKAIEEADFLAIDGEFSGISDGPSVSTLTNGFDTPEERYTKLKKHSMEFLLFQFGLCTFNYDNTEAKYLMKSFNFYIFPKPFNRNSPDKKFVCQSSSIDFLANQGFDFNKVFRNGIPYLNQEEERVLRDQYEDRRSQSNGASTMSYISPNSSKTPVSIPDEQKGFIDKVVERVEDFLKNEQKSMNVEPCTGYQRKLIYQTLNWKYPRGIHVETVESEKKERYIVISKVDEEERKRMEQQKQAKEREELDDAVGFSRIIQAISSSGKLVVGHNMLLDVMHTIHQFFCQLPDELNEFKEVTNCVFPRVLDTKLMASTNPFKEIIYNTSLAELEKRLKEAPFKPPKVDSAEGFQSYNTASEQLHEAGYDAYITGLCFISMANYLGSFLSPPKDYVSCRSKIVRPFFNKLFLMRIMDIPYLNLEGPDLQPKRDNVLHVTFPKEWKTSDLYQLFSAFGNIQVSWIDDTSAFVSLSQPEQVQIAVNTSKYAESYRIQTYAEYIEKKNDESQTKRKWAEDGWKDLERKRLKTQYNSYIPQNPVFYGNCFAPSFAVKRSMSPIQEEAASDDTEEVHTHENDPSNPGATEQGKKPKNHKRQKIDSAPPETSDGGSSVLFEVPDTW.

Residues Asp-28 and Glu-30 each coordinate a divalent metal cation. A disordered region spans residues 147 to 173; sequence EDRRSQSNGASTMSYISPNSSKTPVSI. Positions 152–170 are enriched in polar residues; sequence QSNGASTMSYISPNSSKTP. The region spanning 178 to 244 is the R3H domain; it reads KGFIDKVVER…ERYIVISKVD (67 aa). Positions 291 and 381 each coordinate a divalent metal cation. The interval 568–631 is disordered; the sequence is SPIQEEAASD…SVLFEVPDTW (64 aa).

Belongs to the CAF1 family. In terms of assembly, component of a complex at least composed of cpeb1, cpsf1, papd4/gld2, pabpc1/ePAB, parn and sympk. A divalent metal cation is required as a cofactor. In terms of processing, a 62 kDa form, which is produced by proteolytic cleavage, also exists. As to expression, in retina, it is constitutively present in most retinal cells, including the photoreceptors.

It localises to the cytoplasm. Its subcellular location is the nucleus. It catalyses the reaction Exonucleolytic cleavage of poly(A) to 5'-AMP.. In terms of biological role, 3'-exoribonuclease that has a preference for poly(A) tails of mRNAs, thereby efficiently degrading poly(A) tails. Exonucleolytic degradation of the poly(A) tail is often the first step in the decay of eukaryotic mRNAs. Required during meiotic maturation to silence certain maternal mRNAs translationally. Does not require an adenosine residue at the 3' end, however, the addition of 25 non-adenylate residues at the 3' terminus, or a 3' terminal phosphate is inhibitory. Involved in dormant mRNAs regulation during oocyte maturation by counteracting polyadenylation mediated by papd4/gld2nt in immature eggs. During maturation it is excluded from the ribonucleoprotein complex, allowing poly(A) elongation by papd4/gld2nt and activation of mRNAs. This is Poly(A)-specific ribonuclease PARN (parn) from Xenopus laevis (African clawed frog).